We begin with the raw amino-acid sequence, 150 residues long: 3-hydroxyacyl-[acyl-carrier-protein] dehydratase FabZ (150 aa).

The active site involves His51.

It belongs to the thioester dehydratase family. FabZ subfamily.

Its subcellular location is the cytoplasm. The enzyme catalyses a (3R)-hydroxyacyl-[ACP] = a (2E)-enoyl-[ACP] + H2O. Functionally, involved in unsaturated fatty acids biosynthesis. Catalyzes the dehydration of short chain beta-hydroxyacyl-ACPs and long chain saturated and unsaturated beta-hydroxyacyl-ACPs. The protein is 3-hydroxyacyl-[acyl-carrier-protein] dehydratase FabZ of Legionella pneumophila (strain Lens).